We begin with the raw amino-acid sequence, 237 residues long: tRNA-splicing endonuclease subunit Sen2-1 (237 aa).

Active-site residues include tyrosine 148, histidine 156, and lysine 190.

Belongs to the tRNA-intron endonuclease family. In terms of assembly, tRNA splicing endonuclease is a heterotetramer composed of SEN2, SEN15, SEN34/LENG5 and SEN54.

Its subcellular location is the nucleus. The enzyme catalyses pretRNA = a 3'-half-tRNA molecule with a 5'-OH end + a 5'-half-tRNA molecule with a 2',3'-cyclic phosphate end + an intron with a 2',3'-cyclic phosphate and a 5'-hydroxyl terminus.. Constitutes one of the two catalytic subunit of the tRNA-splicing endonuclease complex, a complex responsible for identification and cleavage of the splice sites in pre-tRNA. It cleaves pre-tRNA at the 5'- and 3'-splice sites to release the intron. The products are an intron and two tRNA half-molecules bearing 2',3'-cyclic phosphate and 5'-OH termini. There are no conserved sequences at the splice sites, but the intron is invariably located at the same site in the gene, placing the splice sites an invariant distance from the constant structural features of the tRNA body. Probably carries the active site for 5'-splice site cleavage. This chain is tRNA-splicing endonuclease subunit Sen2-1 (SEN1), found in Arabidopsis thaliana (Mouse-ear cress).